The following is a 326-amino-acid chain: ATP synthase gamma chain (326 aa).

It belongs to the ATPase gamma chain family. In terms of assembly, F-type ATPases have 2 components, CF(1) - the catalytic core - and CF(0) - the membrane proton channel. CF(1) has five subunits: alpha(3), beta(3), gamma(1), delta(1), epsilon(1). CF(0) has three main subunits: a, b and c.

The protein resides in the cell membrane. Produces ATP from ADP in the presence of a proton gradient across the membrane. The gamma chain is believed to be important in regulating ATPase activity and the flow of protons through the CF(0) complex. This chain is ATP synthase gamma chain, found in Rhodococcus opacus (strain B4).